The primary structure comprises 883 residues: MNEQYSALRSNVSMLGKVLGETIKDALGEHILERVETIRKLSKSSRAGNDANRQELLTTLQNLSNDELLPVARAFSQFLNLANTAEQYHSISPKGEAASNPEVIARTLRKLKNQPELSEDTIKKAVESLSLELVLTAHPTEITRRTLIHKMVEVNACLKQLDNKDIADYEHNQLMRRLRQLIAQSWHTDEIRKLRPSPVDEAKWGFAVVENSLWQGVPNYLRELNEQLEENLGYKLPVEFVPVRFTSWMGGDRDGNPNVTADITRHVLLLSRWKATDLFLKDIQVLVSELSMVEATPELLALVGEEGAAEPYRYLMKNLRSRLMATQAWLEARLKGEELPKPEGLLTQNEELWEPLYACYQSLQACGMGIIANGDLLDTLRRVKCFGVPLVRIDIRQESTRHTEALGELTRYLGIGDYESWSEADKQAFLIRELNSKRPLLPRNWQPSAETREVLDTCQVIAEAPQGSIAAYVISMAKTPSDVLAVHLLLKEAGIGFAMPVAPLFETLDDLNNANDVMTQLLNIDWYRGLIQGKQMVMIGYSDSAKDAGVMAASWAQYQAQDALIKTCEKAGIELTLFHGRGGSIGRGGAPAHAALLSQPPGSLKGGLRVTEQGEMIRFKYGLPEITVSSLSLYTGAILEANLLPPPELKESWRRIMDELSVISCDLYRGYVRENKDFVPYFRSATPEQELGKLPLGSRPAKRRPTGGVESLRAIPWIFAWTQNRLMLPAWLGAGTALQKVVEDGKQSELEAMCRDWPFFSTRLGMLEMVFAKADLWLAEYYDQRLVDKALWPLGKELRNLQEEDIKVVLAIANDSHLMADLPWIAESIQLRNIYTDPLNVLQAELLHRSRQAEKEGQEPDPRVEQALMVTIAGIAAGMRNTG.

Residues His-138 and Lys-546 contribute to the active site.

Belongs to the PEPCase type 1 family. Mg(2+) serves as cofactor.

It catalyses the reaction oxaloacetate + phosphate = phosphoenolpyruvate + hydrogencarbonate. In terms of biological role, forms oxaloacetate, a four-carbon dicarboxylic acid source for the tricarboxylic acid cycle. The chain is Phosphoenolpyruvate carboxylase from Shigella dysenteriae serotype 1 (strain Sd197).